Reading from the N-terminus, the 100-residue chain is MIPLQHGLILAAILFALGLTGLLIRRNLLFMLISLEIMINAAALAFVVAGSVWGQADGQVMYILAISLAAAEASIGLALLLQLHRRRNTLNIDTVSEMRG.

The next 3 helical transmembrane spans lie at 4 to 24 (LQHG…GLLI), 28 to 48 (LLFM…AFVV), and 60 to 80 (VMYI…LALL).

This sequence belongs to the complex I subunit 4L family. As to quaternary structure, NDH-1 is composed of 13 different subunits. Subunits NuoA, H, J, K, L, M, N constitute the membrane sector of the complex.

It is found in the cell inner membrane. It carries out the reaction a quinone + NADH + 5 H(+)(in) = a quinol + NAD(+) + 4 H(+)(out). NDH-1 shuttles electrons from NADH, via FMN and iron-sulfur (Fe-S) centers, to quinones in the respiratory chain. The immediate electron acceptor for the enzyme in this species is believed to be ubiquinone. Couples the redox reaction to proton translocation (for every two electrons transferred, four hydrogen ions are translocated across the cytoplasmic membrane), and thus conserves the redox energy in a proton gradient. The chain is NADH-quinone oxidoreductase subunit K from Edwardsiella ictaluri (strain 93-146).